A 561-amino-acid chain; its full sequence is Solute carrier family 41 member 2 (561 aa).

The Extracellular segment spans residues 1–150 (MTANTGEPYK…KESSIAMALQ (150 aa)). Residues 151 to 171 (ILVPFLLAGFGTVSAGMVLDI) traverse the membrane as a helical segment. The Cytoplasmic segment spans residues 172-183 (VQHWDVFKNLTE). Residues 184–204 (VFILVPALLGLKGNLEMTLAS) form a helical membrane-spanning segment. Residues 205-233 (RLSTAVNVGKMDSPIEKWNLIIGNLALKQ) are Extracellular-facing. The chain crosses the membrane as a helical span at residues 234–254 (VQATVVGFLAAVFAVILGWIP). At 255–270 (DGKYQLDHAILLCSSS) the chain is on the cytoplasmic side. The helical transmembrane segment at 271-291 (VATAFIASLLQGIIMVGVIVG) threads the bilayer. Residues 292-301 (SKKTGINPDN) are Extracellular-facing. The helical transmembrane segment at 302–322 (VATPIAASFGDLITLAILAWI) threads the bilayer. At 323 to 333 (SQGLYNCLGSY) the chain is on the cytoplasmic side. A helical membrane pass occupies residues 334-354 (AFVSPLVGVFFLAMTPIWIVI). The Extracellular segment spans residues 355–364 (ASKHPATRTV). A helical membrane pass occupies residues 365–385 (LHSGWEPVITAMLISSIGGLI). Residues 386–394 (LDTTVSDPN) are Cytoplasmic-facing. Residues 395 to 415 (LVGIVVYTPVINGIGGNLVAI) traverse the membrane as a helical segment. At 416-457 (QASRISTYLHLYSIPGELPEDAKGCYHPCRTFCGTGVNNKSA) the chain is on the extracellular side. The helical transmembrane segment at 458-478 (QVLLSLVIPGHLIFLYTIYLM) threads the bilayer. Over 479–487 (KSGHTSLTP) the chain is Cytoplasmic. The helical transmembrane segment at 488 to 508 (IFVAVYLLAALLQVFALLWIA) threads the bilayer. Residues 509 to 531 (DWMVHHIWRKGKDPDSFSIPYLT) lie on the Extracellular side of the membrane. Residues 532 to 552 (ALGDLLGTALLAISFHILWII) traverse the membrane as a helical segment. The Cytoplasmic portion of the chain corresponds to 553-561 (GDRDGDVGD).

Belongs to the SLC41A transporter family.

The protein resides in the cell membrane. The enzyme catalyses Mg(2+)(in) = Mg(2+)(out). The catalysed reaction is Mn(2+)(in) = Mn(2+)(out). It catalyses the reaction Co(2+)(in) = Co(2+)(out). It carries out the reaction Ni(2+)(in) = Ni(2+)(out). The enzyme catalyses Fe(2+)(in) = Fe(2+)(out). Its function is as follows. Acts as a plasma-membrane magnesium transporter. Can also mediate the transport of other divalent metal cations in an order of Ba(2+) &gt; Ni(2+) &gt; Co(2+) &gt; Fe(2+) &gt; Mn(2+). The protein is Solute carrier family 41 member 2 (slc41a2) of Xenopus laevis (African clawed frog).